A 74-amino-acid chain; its full sequence is Translation initiation factor IF-1 (74 aa).

In terms of domain architecture, S1-like spans 1-72 (MSKQDLIEME…TKGRITYRLR (72 aa)).

The protein belongs to the IF-1 family. Component of the 30S ribosomal translation pre-initiation complex which assembles on the 30S ribosome in the order IF-2 and IF-3, IF-1 and N-formylmethionyl-tRNA(fMet); mRNA recruitment can occur at any time during PIC assembly.

Its subcellular location is the cytoplasm. Functionally, one of the essential components for the initiation of protein synthesis. Stabilizes the binding of IF-2 and IF-3 on the 30S subunit to which N-formylmethionyl-tRNA(fMet) subsequently binds. Helps modulate mRNA selection, yielding the 30S pre-initiation complex (PIC). Upon addition of the 50S ribosomal subunit IF-1, IF-2 and IF-3 are released leaving the mature 70S translation initiation complex. This chain is Translation initiation factor IF-1, found in Trichodesmium erythraeum (strain IMS101).